The following is a 162-amino-acid chain: NADPH-dependent 7-cyano-7-deazaguanine reductase (162 aa).

Residue Cys-53 is the Thioimide intermediate of the active site. Asp-60 (proton donor) is an active-site residue. Substrate-binding positions include 75-77 (VES) and 94-95 (HE).

This sequence belongs to the GTP cyclohydrolase I family. QueF type 1 subfamily.

It is found in the cytoplasm. It carries out the reaction 7-aminomethyl-7-carbaguanine + 2 NADP(+) = 7-cyano-7-deazaguanine + 2 NADPH + 3 H(+). The protein operates within tRNA modification; tRNA-queuosine biosynthesis. Functionally, catalyzes the NADPH-dependent reduction of 7-cyano-7-deazaguanine (preQ0) to 7-aminomethyl-7-deazaguanine (preQ1). This Exiguobacterium sibiricum (strain DSM 17290 / CCUG 55495 / CIP 109462 / JCM 13490 / 255-15) protein is NADPH-dependent 7-cyano-7-deazaguanine reductase.